A 412-amino-acid polypeptide reads, in one-letter code: Cysteate synthase (412 aa).

K105 bears the N6-(pyridoxal phosphate)lysine mark. Residues N131 and T382 each coordinate pyridoxal 5'-phosphate.

It belongs to the threonine synthase family. Cysteate synthase subfamily. Homotrimer. Pyridoxal 5'-phosphate serves as cofactor.

It carries out the reaction O-phospho-L-serine + sulfite + H(+) = L-cysteate + phosphate. The protein operates within cofactor biosynthesis; coenzyme M biosynthesis. Its function is as follows. Specifically catalyzes the beta-elimination of phosphate from L-phosphoserine and the beta-addition of sulfite to the dehydroalanine intermediate to produce L-cysteate. In Methanocorpusculum labreanum (strain ATCC 43576 / DSM 4855 / Z), this protein is Cysteate synthase.